The primary structure comprises 800 residues: Ent-copalyl diphosphate synthase 2, chloroplastic (800 aa).

The transit peptide at 1 to 47 (MQMQVLTAASSLPRATLLRPAAAEPWRQSFLQLQARPIQRPGIMLHC) directs the protein to the chloroplast. The segment at 52–80 (QGQETRERRQLDDDEHARPPQGGDDDVAA) is disordered. The span at 55–69 (ETRERRQLDDDEHAR) shows a compositional bias: basic and acidic residues. K242 is a binding site for substrate. 2 residues coordinate Mg(2+): D374 and D376. The DXDD motif motif lies at 374 to 377 (DIDD). A substrate-binding site is contributed by K461.

The protein belongs to the terpene synthase family. The cofactor is Mg(2+).

It is found in the plastid. The protein resides in the chloroplast. The enzyme catalyses (2E,6E,10E)-geranylgeranyl diphosphate = ent-copalyl diphosphate. It participates in secondary metabolite biosynthesis; terpenoid biosynthesis. Functionally, catalyzes the conversion of geranylgeranyl diphosphate to the phytoalexin precursor ent-copalyl diphosphate. In Oryza sativa subsp. japonica (Rice), this protein is Ent-copalyl diphosphate synthase 2, chloroplastic.